The primary structure comprises 185 residues: Peroxynitrite isomerase (185 aa).

Positions 1-21 (MHHPARELPFPDALRPGARPA) are disordered. Positions 34 to 40 (GTWRGTG) match the GXWXGXG motif. Residue His-171 participates in heme b binding.

It belongs to the nitrobindin family. In terms of assembly, homodimer. Heme b is required as a cofactor.

The enzyme catalyses peroxynitrite = nitrate. Its pathway is nitrogen metabolism. Functionally, heme-binding protein able to scavenge peroxynitrite and to protect free L-tyrosine against peroxynitrite-mediated nitration, by acting as a peroxynitrite isomerase that converts peroxynitrite to nitrate. Therefore, this protein likely plays a role in peroxynitrite sensing and in the detoxification of reactive nitrogen and oxygen species (RNS and ROS, respectively). Is able to bind nitric oxide (NO) in vitro, but may act as a sensor of peroxynitrite levels in vivo. The sequence is that of Peroxynitrite isomerase from Streptomyces griseus subsp. griseus (strain JCM 4626 / CBS 651.72 / NBRC 13350 / KCC S-0626 / ISP 5235).